Here is a 188-residue protein sequence, read N- to C-terminus: Elongation factor P (188 aa).

The protein belongs to the elongation factor P family.

It localises to the cytoplasm. It functions in the pathway protein biosynthesis; polypeptide chain elongation. Its function is as follows. Involved in peptide bond synthesis. Stimulates efficient translation and peptide-bond synthesis on native or reconstituted 70S ribosomes in vitro. Probably functions indirectly by altering the affinity of the ribosome for aminoacyl-tRNA, thus increasing their reactivity as acceptors for peptidyl transferase. The protein is Elongation factor P of Gluconacetobacter diazotrophicus (strain ATCC 49037 / DSM 5601 / CCUG 37298 / CIP 103539 / LMG 7603 / PAl5).